An 839-amino-acid chain; its full sequence is Autophagy-related protein 9A (839 aa).

A2 is subject to N-acetylalanine. Residues 2–61 lie on the Cytoplasmic side of the membrane; sequence AQFDTEYQRLEASYSDSPPGEEDLLVHVAEGSKSPWHHIENLDLFFSRVYNLHQKNGFTC. The Tyrosine-based sorting signal motif lies at 8-11; it reads YQRL. S14, S16, and S18 each carry phosphoserine. Residues 62-84 form a helical membrane-spanning segment; sequence MLIGEMFELMQFLFVVAFTTFLV. At 85–128 the chain is on the lumenal side; that stretch reads SCVDYDILFANKMVNHSLHPTEPVKVTLPDAFLPAQVCSARIQE. N99 carries an N-linked (GlcNAc...) asparagine glycan. A helical transmembrane segment spans residues 129–154; it reads NGSLITILVIAGVFWIHRLIKFIYNI. At 155-290 the chain is on the cytoplasmic side; the sequence is CCYWEIHSFY…ELAQRLSNRI (136 aa). Residues 291–301 lie within the membrane without spanning it; it reads LWIGIANFLLC. Residues 302–319 lie on the Cytoplasmic side of the membrane; it reads PLILIWQILYAFFSYAEV. The stretch at 320-328 is an intramembrane region; that stretch reads LKREPGALG. The Cytoplasmic segment spans residues 329 to 371; that stretch reads ARCWSLYGRCYLRHFNELEHELQSRLNRGYKPASKYMNCFLSP. A helical membrane pass occupies residues 372 to 397; that stretch reads LLTLLAKNGAFFAGSILAVLIALTIY. The Lumenal segment spans residues 398 to 406; sequence DEDVLAVEH. A helical membrane pass occupies residues 407 to 424; sequence VLTTVTLLGVTVTVCRSF. At 425–470 the chain is on the cytoplasmic side; it reads IPDQHMVFCPEQLLRVILAHIHYMPDHWQGNAHRSQTRDEFAQLFQ. The stretch at 471-480 is an intramembrane region; that stretch reads YKAVFILEEL. Topologically, residues 481–483 are cytoplasmic; the sequence is LSP. The stretch at 484–492 is an intramembrane region; the sequence is IVTPLILIF. Residues 493–839 are Cytoplasmic-facing; that stretch reads CLRPRALEII…DELPPQVHKV (347 aa). Position 656 is a phosphoserine (S656). Disordered regions lie at residues 657-686 and 717-839; these read PLQP…SSGS and HKQQ…VHKV. Residues 724 to 736 show a composition bias toward basic and acidic residues; sequence EPERHVWHRRESD. 4 positions are modified to phosphoserine: S735, S738, S741, and S828. 2 stretches are compositionally biased toward acidic residues: residues 737–747 and 823–832; these read ESGESAPEEGG and VPEEGSEDEL.

It belongs to the ATG9 family. In terms of assembly, homotrimer; forms a homotrimer with a central pore that forms a path between the two membrane leaflets. Interacts (via cytoplasmic its C-terminus) with ATG2A. Interacts with SUPT20H. Interacts (via the tyrosine-based sorting signal motif) with AP4M1; promoting association with the AP-4 complex. Interacts with ARFIP1 and ARFIP2. Interacts with ATG4A; the interaction is direct and promotes ATG9A trafficking. In terms of processing, ufmylated in a DDRGK1 dependent manner.

Its subcellular location is the preautophagosomal structure membrane. The protein resides in the cytoplasmic vesicle. It localises to the autophagosome membrane. It is found in the golgi apparatus. The protein localises to the trans-Golgi network membrane. Its subcellular location is the late endosome membrane. The protein resides in the recycling endosome membrane. It localises to the endoplasmic reticulum membrane. It is found in the mitochondrion membrane. It carries out the reaction a 1,2-diacyl-sn-glycero-3-phosphocholine(in) = a 1,2-diacyl-sn-glycero-3-phosphocholine(out). It catalyses the reaction a 1,2-diacyl-sn-glycero-3-phospho-L-serine(in) = a 1,2-diacyl-sn-glycero-3-phospho-L-serine(out). The catalysed reaction is a 1,2-diacyl-sn-glycero-3-phosphoethanolamine(in) = a 1,2-diacyl-sn-glycero-3-phosphoethanolamine(out). Its function is as follows. Phospholipid scramblase involved in autophagy by mediating autophagosomal membrane expansion. Cycles between the preautophagosomal structure/phagophore assembly site (PAS) and the cytoplasmic vesicle pool and supplies membrane for the growing autophagosome. Lipid scramblase activity plays a key role in preautophagosomal structure/phagophore assembly by distributing the phospholipids that arrive through ATG2 (ATG2A or ATG2B) from the cytoplasmic to the luminal leaflet of the bilayer, thereby driving autophagosomal membrane expansion. Also required to supply phosphatidylinositol 4-phosphate to the autophagosome initiation site by recruiting the phosphatidylinositol 4-kinase beta (PI4KB) in a process dependent on ARFIP2, but not ARFIP1. In addition to autophagy, also plays a role in necrotic cell death. The chain is Autophagy-related protein 9A from Mus musculus (Mouse).